The primary structure comprises 313 residues: Type II restriction enzyme BsuMI component YdiR (313 aa).

Positions 289–313 are disordered; it reads FVSGDIVDENATTSSDDLPEDFENN.

BsuMI restriction activity requires YdiR, YdiS and YdjA.

The catalysed reaction is Endonucleolytic cleavage of DNA to give specific double-stranded fragments with terminal 5'-phosphates.. Functionally, a P subtype restriction enzyme that recognizes the double-stranded sequence 5'-CTCGAG-3'; the cleavage site is unknown. The protein is Type II restriction enzyme BsuMI component YdiR (ydiR) of Bacillus subtilis (strain 168).